A 72-amino-acid polypeptide reads, in one-letter code: Hypertrehalosaemic prohormone (72 aa).

A signal peptide spans 1–21 (MNHLVKVLIVVVAIALVLCEA). The residue at position 22 (glutamine 22) is a Pyrrolidone carboxylic acid. A Threonine amide modification is found at threonine 31.

The protein belongs to the AKH/HRTH/RPCH family. As to expression, expressed in corpora cardiaca.

Its subcellular location is the secreted. Functionally, hypertrehalosaemic factors are neuropeptides that elevate the level of trehalose in the hemolymph (trehalose is the major carbohydrate in the hemolymph of insects). This Blaberus discoidalis (Tropical cockroach) protein is Hypertrehalosaemic prohormone.